The sequence spans 344 residues: Methionine import ATP-binding protein MetN 1 (344 aa).

The 240-residue stretch at 2 to 241 (IEIRNISQRF…PHHEVTRALI (240 aa)) folds into the ABC transporter domain. Residue 38-45 (GRSGAGKS) participates in ATP binding.

It belongs to the ABC transporter superfamily. Methionine importer (TC 3.A.1.24) family. In terms of assembly, the complex is composed of two ATP-binding proteins (MetN), two transmembrane proteins (MetI) and a solute-binding protein (MetQ).

The protein localises to the cell inner membrane. It catalyses the reaction L-methionine(out) + ATP + H2O = L-methionine(in) + ADP + phosphate + H(+). The enzyme catalyses D-methionine(out) + ATP + H2O = D-methionine(in) + ADP + phosphate + H(+). Part of the ABC transporter complex MetNIQ involved in methionine import. Responsible for energy coupling to the transport system. This Paraburkholderia xenovorans (strain LB400) protein is Methionine import ATP-binding protein MetN 1.